Here is a 165-residue protein sequence, read N- to C-terminus: Acireductone dioxygenase (165 aa).

4 residues coordinate Fe(2+): His90, His92, Glu96, and His134. Ni(2+)-binding residues include His90, His92, Glu96, and His134.

It belongs to the acireductone dioxygenase (ARD) family. Monomer. The cofactor is Fe(2+). Ni(2+) is required as a cofactor.

The catalysed reaction is 1,2-dihydroxy-5-(methylsulfanyl)pent-1-en-3-one + O2 = 3-(methylsulfanyl)propanoate + CO + formate + 2 H(+). The enzyme catalyses 1,2-dihydroxy-5-(methylsulfanyl)pent-1-en-3-one + O2 = 4-methylsulfanyl-2-oxobutanoate + formate + 2 H(+). It participates in amino-acid biosynthesis; L-methionine biosynthesis via salvage pathway; L-methionine from S-methyl-5-thio-alpha-D-ribose 1-phosphate: step 5/6. Functionally, catalyzes 2 different reactions between oxygen and the acireductone 1,2-dihydroxy-3-keto-5-methylthiopentene (DHK-MTPene) depending upon the metal bound in the active site. Fe-containing acireductone dioxygenase (Fe-ARD) produces formate and 2-keto-4-methylthiobutyrate (KMTB), the alpha-ketoacid precursor of methionine in the methionine recycle pathway. Ni-containing acireductone dioxygenase (Ni-ARD) produces methylthiopropionate, carbon monoxide and formate, and does not lie on the methionine recycle pathway. The polypeptide is Acireductone dioxygenase (Rhodopseudomonas palustris (strain TIE-1)).